Reading from the N-terminus, the 372-residue chain is Spermidine/putrescine import ATP-binding protein PotA (372 aa).

Positions 12-250 (VSIRSVRKVY…PRNRFVADFI (239 aa)) constitute an ABC transporter domain. Residue 48–55 (GPSGCGKT) coordinates ATP.

The protein belongs to the ABC transporter superfamily. Spermidine/putrescine importer (TC 3.A.1.11.1) family. The complex is composed of two ATP-binding proteins (PotA), two transmembrane proteins (PotB and PotC) and a solute-binding protein (PotD).

Its subcellular location is the cell inner membrane. The catalysed reaction is ATP + H2O + polyamine-[polyamine-binding protein]Side 1 = ADP + phosphate + polyamineSide 2 + [polyamine-binding protein]Side 1.. In terms of biological role, part of the ABC transporter complex PotABCD involved in spermidine/putrescine import. Responsible for energy coupling to the transport system. This Pseudomonas fluorescens (strain ATCC BAA-477 / NRRL B-23932 / Pf-5) protein is Spermidine/putrescine import ATP-binding protein PotA.